Consider the following 149-residue polypeptide: Large ribosomal subunit protein bL9 (149 aa).

Position 89 is an N6-acetyllysine (K89).

It belongs to the bacterial ribosomal protein bL9 family.

Its function is as follows. Binds to the 23S rRNA. The protein is Large ribosomal subunit protein bL9 of Shigella boydii serotype 18 (strain CDC 3083-94 / BS512).